Here is a 558-residue protein sequence, read N- to C-terminus: GPI mannosyltransferase 3 (558 aa).

A run of 4 helical transmembrane segments spans residues 53-73, 81-101, 164-184, and 190-210; these read GLRSVLFPAVVALPFYLLKLL, VWFAPRVLQALVLTLIDVSVF, AYCGVRLYGNVIEALLVLLTL, and VPFLLLTGLASAIRVTSAVVL. N-linked (GlcNAc...) asparagine glycosylation occurs at asparagine 220. Residues 234–254 form a helical membrane-spanning segment; the sequence is IVLTGLIVLVAVLGGVMVLDY. A glycan (N-linked (GlcNAc...) asparagine) is linked at asparagine 275. 4 consecutive transmembrane segments (helical) span residues 292–312, 323–343, 348–368, and 372–392; these read VLVGIVGPHVLFTIAAPLVLW, PVLGMLGIGAWTLGFYSLIDH, FVFVVIPLSLITAAFVLVRWS, and AVVVKMNRLFVLFNIVMIYLM.

The protein belongs to the glycosyltransferase 22 family. PIGB subfamily.

It localises to the endoplasmic reticulum membrane. The protein operates within glycolipid biosynthesis; glycosylphosphatidylinositol-anchor biosynthesis. In terms of biological role, mannosyltransferase involved in glycosylphosphatidylinositol-anchor biosynthesis. Transfers the third alpha-1,2-mannose to Man2-GlcN-acyl-PI during GPI precursor assembly. This is GPI mannosyltransferase 3 (GPI10) from Trypanosoma brucei brucei.